The primary structure comprises 410 residues: Regulator of microtubule dynamics protein 2 (410 aa).

Residues 9 to 28 traverse the membrane as a helical segment; the sequence is LILGIMVGTAGISLLLLWYH. Ser51 is modified (phosphoserine). Residues 68 to 110 adopt a coiled-coil conformation; that stretch reads FQERQLQILEKLNELLTNMEELKEEIRFLKEAIPKLEEYIQDE. The residue at position 121 (Ser121) is a Phosphoserine. Basic residues predominate over residues 122–131; it reads PQHRARKRRL. Positions 122–164 are disordered; sequence PQHRARKRRLPTIQSSATSNSSEEAESEGGYITANTDTEEQSF. Thr139 carries the phosphothreonine modification. Tyr152 is modified (phosphotyrosine). Phosphothreonine is present on residues Thr154 and Thr157.

The protein belongs to the RMDN family. In terms of assembly, interacts with microtubules.

It is found in the membrane. The protein localises to the cytoplasm. It localises to the cytoskeleton. Its subcellular location is the spindle. The protein resides in the spindle pole. The polypeptide is Regulator of microtubule dynamics protein 2 (RMDN2) (Homo sapiens (Human)).